Consider the following 293-residue polypeptide: Ribosomal protein L11 methyltransferase (293 aa).

4 residues coordinate S-adenosyl-L-methionine: Thr145, Gly166, Asp188, and Asn230.

This sequence belongs to the methyltransferase superfamily. PrmA family.

It localises to the cytoplasm. The enzyme catalyses L-lysyl-[protein] + 3 S-adenosyl-L-methionine = N(6),N(6),N(6)-trimethyl-L-lysyl-[protein] + 3 S-adenosyl-L-homocysteine + 3 H(+). Functionally, methylates ribosomal protein L11. This is Ribosomal protein L11 methyltransferase from Erwinia tasmaniensis (strain DSM 17950 / CFBP 7177 / CIP 109463 / NCPPB 4357 / Et1/99).